The following is a 553-amino-acid chain: Dihydroxy-acid dehydratase (553 aa).

Asp-78 contacts Mg(2+). Position 119 (Cys-119) interacts with [2Fe-2S] cluster. The Mg(2+) site is built by Asp-120 and Lys-121. Lys-121 bears the N6-carboxylysine mark. Residue Cys-193 coordinates [2Fe-2S] cluster. Glu-441 provides a ligand contact to Mg(2+). Ser-467 serves as the catalytic Proton acceptor.

Belongs to the IlvD/Edd family. Homodimer. Requires [2Fe-2S] cluster as cofactor. The cofactor is Mg(2+).

It carries out the reaction (2R)-2,3-dihydroxy-3-methylbutanoate = 3-methyl-2-oxobutanoate + H2O. It catalyses the reaction (2R,3R)-2,3-dihydroxy-3-methylpentanoate = (S)-3-methyl-2-oxopentanoate + H2O. Its pathway is amino-acid biosynthesis; L-isoleucine biosynthesis; L-isoleucine from 2-oxobutanoate: step 3/4. The protein operates within amino-acid biosynthesis; L-valine biosynthesis; L-valine from pyruvate: step 3/4. Functionally, functions in the biosynthesis of branched-chain amino acids. Catalyzes the dehydration of (2R,3R)-2,3-dihydroxy-3-methylpentanoate (2,3-dihydroxy-3-methylvalerate) into 2-oxo-3-methylpentanoate (2-oxo-3-methylvalerate) and of (2R)-2,3-dihydroxy-3-methylbutanoate (2,3-dihydroxyisovalerate) into 2-oxo-3-methylbutanoate (2-oxoisovalerate), the penultimate precursor to L-isoleucine and L-valine, respectively. This Geobacter sulfurreducens (strain ATCC 51573 / DSM 12127 / PCA) protein is Dihydroxy-acid dehydratase.